A 61-amino-acid polypeptide reads, in one-letter code: Small ribosomal subunit protein uS14 (61 aa).

Zn(2+) contacts are provided by Cys-24, Cys-27, Cys-40, and Cys-43.

The protein belongs to the universal ribosomal protein uS14 family. Zinc-binding uS14 subfamily. In terms of assembly, part of the 30S ribosomal subunit. Contacts proteins S3 and S10. Zn(2+) serves as cofactor.

In terms of biological role, binds 16S rRNA, required for the assembly of 30S particles and may also be responsible for determining the conformation of the 16S rRNA at the A site. The chain is Small ribosomal subunit protein uS14 from Dictyoglomus turgidum (strain DSM 6724 / Z-1310).